The sequence spans 722 residues: 1,4-alpha-glucan branching enzyme GlgB (722 aa).

Asp-401 acts as the Nucleophile in catalysis. Glu-454 functions as the Proton donor in the catalytic mechanism.

This sequence belongs to the glycosyl hydrolase 13 family. GlgB subfamily. In terms of assembly, monomer.

The catalysed reaction is Transfers a segment of a (1-&gt;4)-alpha-D-glucan chain to a primary hydroxy group in a similar glucan chain.. It participates in glycan biosynthesis; glycogen biosynthesis. In terms of biological role, catalyzes the formation of the alpha-1,6-glucosidic linkages in glycogen by scission of a 1,4-alpha-linked oligosaccharide from growing alpha-1,4-glucan chains and the subsequent attachment of the oligosaccharide to the alpha-1,6 position. The sequence is that of 1,4-alpha-glucan branching enzyme GlgB from Rubrobacter xylanophilus (strain DSM 9941 / JCM 11954 / NBRC 16129 / PRD-1).